Here is a 407-residue protein sequence, read N- to C-terminus: Imidazolonepropionase (407 aa).

Fe(3+) contacts are provided by His74 and His76. Zn(2+) contacts are provided by His74 and His76. 3 residues coordinate 4-imidazolone-5-propanoate: Arg83, Tyr146, and His179. Tyr146 contacts N-formimidoyl-L-glutamate. Fe(3+) is bound at residue His244. His244 lines the Zn(2+) pocket. Gln247 contacts 4-imidazolone-5-propanoate. Residue Asp319 coordinates Fe(3+). Residue Asp319 participates in Zn(2+) binding. The N-formimidoyl-L-glutamate site is built by Asn321 and Gly323. Residue Thr324 participates in 4-imidazolone-5-propanoate binding.

The protein belongs to the metallo-dependent hydrolases superfamily. HutI family. Requires Zn(2+) as cofactor. It depends on Fe(3+) as a cofactor.

The protein resides in the cytoplasm. It catalyses the reaction 4-imidazolone-5-propanoate + H2O = N-formimidoyl-L-glutamate. Its pathway is amino-acid degradation; L-histidine degradation into L-glutamate; N-formimidoyl-L-glutamate from L-histidine: step 3/3. Its function is as follows. Catalyzes the hydrolytic cleavage of the carbon-nitrogen bond in imidazolone-5-propanoate to yield N-formimidoyl-L-glutamate. It is the third step in the universal histidine degradation pathway. This Salmonella heidelberg (strain SL476) protein is Imidazolonepropionase.